Reading from the N-terminus, the 354-residue chain is FAD synthetase 1, chloroplastic (354 aa).

The N-terminal 75 residues, 1–75 (MLCGGSRASV…SQGDDHPELS (75 aa)), are a transit peptide targeting the chloroplast. The tract at residues 228–248 (SVNTEEEDSKSKERGQVSSTR) is disordered.

The cofactor is Mg(2+).

It is found in the plastid. The protein localises to the chloroplast. The catalysed reaction is FMN + ATP + H(+) = FAD + diphosphate. The protein operates within cofactor biosynthesis; FAD biosynthesis; FAD from FMN: step 1/1. Its function is as follows. Catalyzes the adenylation of flavin mononucleotide (FMN) to form flavin adenine dinucleotide (FAD) coenzyme. This chain is FAD synthetase 1, chloroplastic, found in Arabidopsis thaliana (Mouse-ear cress).